The sequence spans 1148 residues: Putative ATP-dependent RNA helicase rha-2 (1148 aa).

Residues 1–10 are compositionally biased toward basic and acidic residues; that stretch reads MGKRKTKEDN. Disordered regions lie at residues 1-51 and 101-163; these read MGKR…FAKE and STKL…DAGN. The segment covering 138–160 has biased composition (acidic residues); that stretch reads PTDDESSSEEEEEEEEGDNDIED. Positions 246–412 constitute a Helicase ATP-binding domain; that stretch reads VEAINENLVT…KLFPLLTPKV (167 aa). 259-266 is a binding site for ATP; sequence GETGSGKT. The short motif at 355-358 is the DEAH box element; that stretch reads DEAH. In terms of domain architecture, Helicase C-terminal spans 463 to 703; sequence EVKQLITKLK…QLVLHLKSMN (241 aa).

Belongs to the DEAD box helicase family. DEAH subfamily.

The enzyme catalyses ATP + H2O = ADP + phosphate + H(+). Probable ATP-binding RNA helicase. The polypeptide is Putative ATP-dependent RNA helicase rha-2 (rha-2) (Caenorhabditis elegans).